The sequence spans 363 residues: Thioredoxin domain-containing protein C13F5.05, mitochondrial (363 aa).

A mitochondrion-targeting transit peptide spans 1–24 (MLFRIPTLFTLFLACFSLVSGVFG). The Thioredoxin domain occupies 32 to 141 (NTIELNSKNF…KSLQKFVSDS (110 aa)).

The protein resides in the mitochondrion. This chain is Thioredoxin domain-containing protein C13F5.05, mitochondrial, found in Schizosaccharomyces pombe (strain 972 / ATCC 24843) (Fission yeast).